We begin with the raw amino-acid sequence, 344 residues long: Holliday junction branch migration complex subunit RuvB (344 aa).

A large ATPase domain (RuvB-L) region spans residues 1-181; sequence MERIVTPAEM…FGVLCAMEYY (181 aa). Residues L20, R21, G62, K65, T66, T67, 128–130, R171, Y181, and R218 contribute to the ATP site; that span reads EDY. T66 serves as a coordination point for Mg(2+). A small ATPAse domain (RuvB-S) region spans residues 182 to 252; that stretch reads DENQLKEIVI…EAREALELLE (71 aa). The head domain (RuvB-H) stretch occupies residues 255-344; the sequence is NQGFDKVDNK…SNKGQTSFFK (90 aa). DNA contacts are provided by R310 and R315.

It belongs to the RuvB family. Homohexamer. Forms an RuvA(8)-RuvB(12)-Holliday junction (HJ) complex. HJ DNA is sandwiched between 2 RuvA tetramers; dsDNA enters through RuvA and exits via RuvB. An RuvB hexamer assembles on each DNA strand where it exits the tetramer. Each RuvB hexamer is contacted by two RuvA subunits (via domain III) on 2 adjacent RuvB subunits; this complex drives branch migration. In the full resolvosome a probable DNA-RuvA(4)-RuvB(12)-RuvC(2) complex forms which resolves the HJ.

The protein resides in the cytoplasm. The enzyme catalyses ATP + H2O = ADP + phosphate + H(+). Its function is as follows. The RuvA-RuvB-RuvC complex processes Holliday junction (HJ) DNA during genetic recombination and DNA repair, while the RuvA-RuvB complex plays an important role in the rescue of blocked DNA replication forks via replication fork reversal (RFR). RuvA specifically binds to HJ cruciform DNA, conferring on it an open structure. The RuvB hexamer acts as an ATP-dependent pump, pulling dsDNA into and through the RuvAB complex. RuvB forms 2 homohexamers on either side of HJ DNA bound by 1 or 2 RuvA tetramers; 4 subunits per hexamer contact DNA at a time. Coordinated motions by a converter formed by DNA-disengaged RuvB subunits stimulates ATP hydrolysis and nucleotide exchange. Immobilization of the converter enables RuvB to convert the ATP-contained energy into a lever motion, pulling 2 nucleotides of DNA out of the RuvA tetramer per ATP hydrolyzed, thus driving DNA branch migration. The RuvB motors rotate together with the DNA substrate, which together with the progressing nucleotide cycle form the mechanistic basis for DNA recombination by continuous HJ branch migration. Branch migration allows RuvC to scan DNA until it finds its consensus sequence, where it cleaves and resolves cruciform DNA. The polypeptide is Holliday junction branch migration complex subunit RuvB (Clostridium botulinum (strain Alaska E43 / Type E3)).